Reading from the N-terminus, the 358-residue chain is Isopentenyl-diphosphate delta-isomerase (358 aa).

12 to 13 lines the substrate pocket; sequence RK. FMN contacts are provided by residues 69–71, Ser-99, and Asn-128; that span reads AMT. Gln-158 provides a ligand contact to substrate. Glu-159 contacts Mg(2+). FMN-binding positions include Lys-190, Thr-220, 267-269, and 288-289; these read GIR and AG.

The protein belongs to the IPP isomerase type 2 family. In terms of assembly, homooctamer. Dimer of tetramers. It depends on FMN as a cofactor. Requires NADPH as cofactor. Mg(2+) serves as cofactor.

The protein localises to the cytoplasm. It catalyses the reaction isopentenyl diphosphate = dimethylallyl diphosphate. In terms of biological role, involved in the biosynthesis of isoprenoids. Catalyzes the 1,3-allylic rearrangement of the homoallylic substrate isopentenyl (IPP) to its allylic isomer, dimethylallyl diphosphate (DMAPP). The sequence is that of Isopentenyl-diphosphate delta-isomerase from Listeria monocytogenes serotype 4b (strain CLIP80459).